The chain runs to 353 residues: Peroxidase C1A (353 aa).

A signal peptide spans 1-30 (MHFSSSSTLFTCITLIPLVCLILHASLSDA). Residue Gln-31 is modified to Pyrrolidone carboxylic acid. Disulfide bonds link Cys-41–Cys-121, Cys-74–Cys-79, Cys-127–Cys-331, and Cys-207–Cys-239. N-linked (GlcNAc...) asparagine glycosylation is present at Asn-43. The active-site Proton acceptor is the His-72. 5 residues coordinate Ca(2+): Asp-73, Val-76, Gly-78, Asp-80, and Ser-82. N-linked (GlcNAc...) asparagine glycosylation is present at Asn-87. Position 94 (Glu-94) interacts with Ca(2+). A substrate-binding site is contributed by Pro-169. An N-linked (GlcNAc...) asparagine glycan is attached at Asn-188. His-200 is a binding site for heme b. Thr-201 is a binding site for Ca(2+). Asn-216, Asn-228, and Asn-244 each carry an N-linked (GlcNAc...) asparagine glycan. Asp-252, Thr-255, and Asp-260 together coordinate Ca(2+). N-linked (GlcNAc...) asparagine glycosylation is found at Asn-285 and Asn-298. A propeptide spanning residues 339–353 (LLHDMVEVVDFVSSM) is cleaved from the precursor.

This sequence belongs to the peroxidase family. Classical plant (class III) peroxidase subfamily. As to quaternary structure, monomer. It depends on Ca(2+) as a cofactor. Requires heme b as cofactor.

Its subcellular location is the secreted. It is found in the vacuole. The catalysed reaction is 2 a phenolic donor + H2O2 = 2 a phenolic radical donor + 2 H2O. Its function is as follows. Removal of H(2)O(2), oxidation of toxic reductants, biosynthesis and degradation of lignin, suberization, auxin catabolism, response to environmental stresses such as wounding, pathogen attack and oxidative stress. These functions might be dependent on each isozyme/isoform in each plant tissue. In Armoracia rusticana (Horseradish), this protein is Peroxidase C1A (PRXC1A).